Here is a 364-residue protein sequence, read N- to C-terminus: Probable dual-specificity RNA methyltransferase RlmN (364 aa).

Residue glutamate 107 is the Proton acceptor of the active site. The Radical SAM core domain maps to histidine 113–aspartate 346. Cysteines 120 and 351 form a disulfide. 3 residues coordinate [4Fe-4S] cluster: cysteine 127, cysteine 131, and cysteine 134. Residues glycine 177–glutamate 178, serine 209, serine 232–histidine 234, and asparagine 308 contribute to the S-adenosyl-L-methionine site. Cysteine 351 acts as the S-methylcysteine intermediate in catalysis.

This sequence belongs to the radical SAM superfamily. RlmN family. The cofactor is [4Fe-4S] cluster.

The protein localises to the cytoplasm. It catalyses the reaction adenosine(2503) in 23S rRNA + 2 reduced [2Fe-2S]-[ferredoxin] + 2 S-adenosyl-L-methionine = 2-methyladenosine(2503) in 23S rRNA + 5'-deoxyadenosine + L-methionine + 2 oxidized [2Fe-2S]-[ferredoxin] + S-adenosyl-L-homocysteine. The enzyme catalyses adenosine(37) in tRNA + 2 reduced [2Fe-2S]-[ferredoxin] + 2 S-adenosyl-L-methionine = 2-methyladenosine(37) in tRNA + 5'-deoxyadenosine + L-methionine + 2 oxidized [2Fe-2S]-[ferredoxin] + S-adenosyl-L-homocysteine. Specifically methylates position 2 of adenine 2503 in 23S rRNA and position 2 of adenine 37 in tRNAs. Confers resistance to some classes of antibiotics. This chain is Probable dual-specificity RNA methyltransferase RlmN, found in Staphylococcus aureus (strain MW2).